Here is a 492-residue protein sequence, read N- to C-terminus: Trypanothione reductase (492 aa).

Asp35–Cys52 provides a ligand contact to FAD. Cysteines 52 and 57 form a disulfide. His461 functions as the Proton acceptor in the catalytic mechanism.

It belongs to the class-I pyridine nucleotide-disulfide oxidoreductase family. Homodimer. It depends on FAD as a cofactor.

The protein localises to the cytoplasm. The catalysed reaction is trypanothione + NADP(+) = trypanothione disulfide + NADPH + H(+). Its function is as follows. Trypanothione is the parasite analog of glutathione; this enzyme is the equivalent of glutathione reductase. The sequence is that of Trypanothione reductase (TPR) from Trypanosoma brucei brucei.